The sequence spans 451 residues: Tubulin alpha-1 chain (451 aa).

Glutamine 11 is a GTP binding site. Lysine 40 is subject to N6-acetyllysine. GTP-binding residues include glutamate 71, threonine 145, threonine 179, asparagine 206, and asparagine 228. Glutamate 71 lines the Mg(2+) pocket. Glutamate 254 is an active-site residue. The disordered stretch occupies residues 429–451 (EKDYEEVGAESGEGEEGDEGEEY). Over residues 431 to 451 (DYEEVGAESGEGEEGDEGEEY) the composition is skewed to acidic residues.

This sequence belongs to the tubulin family. As to quaternary structure, dimer of alpha and beta chains. A typical microtubule is a hollow water-filled tube with an outer diameter of 25 nm and an inner diameter of 15 nM. Alpha-beta heterodimers associate head-to-tail to form protofilaments running lengthwise along the microtubule wall with the beta-tubulin subunit facing the microtubule plus end conferring a structural polarity. Microtubules usually have 13 protofilaments but different protofilament numbers can be found in some organisms and specialized cells. Mg(2+) serves as cofactor. In terms of processing, undergoes a tyrosination/detyrosination cycle, the cyclic removal and re-addition of a C-terminal tyrosine residue by the enzymes tubulin tyrosine carboxypeptidase (TTCP) and tubulin tyrosine ligase (TTL), respectively. Post-translationally, acetylation of alpha chains at Lys-40 stabilizes microtubules and affects affinity and processivity of microtubule motors. This modification has a role in multiple cellular functions, ranging from cell motility, cell cycle progression or cell differentiation to intracellular trafficking and signaling.

The protein localises to the cytoplasm. The protein resides in the cytoskeleton. The catalysed reaction is GTP + H2O = GDP + phosphate + H(+). In terms of biological role, tubulin is the major constituent of microtubules, a cylinder consisting of laterally associated linear protofilaments composed of alpha- and beta-tubulin heterodimers. Microtubules grow by the addition of GTP-tubulin dimers to the microtubule end, where a stabilizing cap forms. Below the cap, tubulin dimers are in GDP-bound state, owing to GTPase activity of alpha-tubulin. The chain is Tubulin alpha-1 chain (TUBA1) from Anemia phyllitidis (Fern).